The primary structure comprises 1170 residues: NPC intracellular sterol transporter 1-related protein 1 (1170 aa).

The first 19 residues, 1–19, serve as a signal peptide directing secretion; the sequence is MNVLWIIALVGQLMRLVQG. 8 cysteine pairs are disulfide-bonded: C23–C75, C29–C41, C64–C110, C76–C114, C98–C230, C101–C156, C223–C235, and C232–C239. N-linked (GlcNAc...) asparagine glycosylation is found at N123, N145, and N178. A helical transmembrane segment spans residues 260-280; it reads LSVLIFYTICALFAFMWYYLC. N-linked (GlcNAc...) asparagine glycosylation is present at N314. Residues 341-361 form a helical membrane-spanning segment; that stretch reads ILITTVFSIFVFSFIIFQYAT. N401 carries an N-linked (GlcNAc...) asparagine glycan. Disulfide bonds link C438–C447 and C473–C480. N513 carries N-linked (GlcNAc...) asparagine glycosylation. 6 helical membrane-spanning segments follow: residues 556-576, 585-605, 616-636, 667-687, 698-718, and 752-772; these read NDISTVAISYLMMFLYATWAL, LLLGISGLLIVLASIVCAAGF, IIAEVIPFLILAIGIDNIFLI, ILMSLLCQTGCFLIAAFVTMP, VSVIFNGVLQLTAYVSILSLY, and IIIIFSAWFFTSLVFLPEIQF. The 161-residue stretch at 557–717 folds into the SSD domain; the sequence is DISTVAISYL…LTAYVSILSL (161 aa). 4 cysteine pairs are disulfide-bonded: C822–C828, C868–C925, C869–C891, and C879–C888. N900 and N940 each carry an N-linked (GlcNAc...) asparagine glycan. 5 helical membrane passes run 1000-1020, 1027-1047, 1054-1074, 1099-1119, and 1133-1153; these read LTLKLIGSAIILIFFISSVFL, FLLALVVTMIIVDIGALMALL, VSLVNLIICVGLGVEFCVHIV, IGESVIKGITLTKFIGVCVLA, and MWFTLIIVAALHALLFLPALL.

The protein belongs to the patched family.

Its subcellular location is the vacuole membrane. Its function is as follows. Involved in sphingolipid trafficking. May recycle sphingolipids between cellular membranous compartments. The chain is NPC intracellular sterol transporter 1-related protein 1 from Saccharomyces cerevisiae (strain ATCC 204508 / S288c) (Baker's yeast).